A 129-amino-acid polypeptide reads, in one-letter code: Large ribosomal subunit protein bL19 (129 aa).

Belongs to the bacterial ribosomal protein bL19 family.

Its function is as follows. This protein is located at the 30S-50S ribosomal subunit interface and may play a role in the structure and function of the aminoacyl-tRNA binding site. This chain is Large ribosomal subunit protein bL19, found in Granulibacter bethesdensis (strain ATCC BAA-1260 / CGDNIH1).